The following is a 412-amino-acid chain: Subtilisin-like protease 6 (412 aa).

A signal peptide spans 1–20 (MGFITKAIPIVLAALSTVNG). A propeptide spanning residues 21–127 (ARILEAGPHA…VRATTNGTNL (107 aa)) is cleaved from the precursor. One can recognise an Inhibitor I9 domain in the interval 36–120 (KYIVVMKKDV…FIEPDFVVRA (85 aa)). 2 N-linked (GlcNAc...) asparagine glycosylation sites follow: Asn123 and Asn126. Residues 135–412 (SWGLARVSTR…SKLIYNGSGK (278 aa)) enclose the Peptidase S8 domain. Catalysis depends on charge relay system residues Asp167 and His198. Asn252, Asn264, and Asn325 each carry an N-linked (GlcNAc...) asparagine glycan. Ser358 functions as the Charge relay system in the catalytic mechanism. The N-linked (GlcNAc...) asparagine glycan is linked to Asn408.

It belongs to the peptidase S8 family.

Its subcellular location is the secreted. Its function is as follows. Secreted subtilisin-like serine protease with keratinolytic activity that contributes to pathogenicity. In Trichophyton verrucosum (Cattle ringworm fungus), this protein is Subtilisin-like protease 6 (SUB6).